A 673-amino-acid chain; its full sequence is DNA ligase (673 aa).

NAD(+) contacts are provided by residues 35-39 (DADYD), 84-85 (SL), and Glu-115. The active-site N6-AMP-lysine intermediate is the Lys-117. NAD(+) contacts are provided by Arg-138, Glu-180, Lys-296, and Lys-320. Residues Cys-415, Cys-418, Cys-433, and Cys-438 each contribute to the Zn(2+) site. One can recognise a BRCT domain in the interval 595-673 (ERGTALAGQT…EDALKKLLGK (79 aa)).

The protein belongs to the NAD-dependent DNA ligase family. LigA subfamily. Mg(2+) serves as cofactor. Requires Mn(2+) as cofactor.

The catalysed reaction is NAD(+) + (deoxyribonucleotide)n-3'-hydroxyl + 5'-phospho-(deoxyribonucleotide)m = (deoxyribonucleotide)n+m + AMP + beta-nicotinamide D-nucleotide.. Its function is as follows. DNA ligase that catalyzes the formation of phosphodiester linkages between 5'-phosphoryl and 3'-hydroxyl groups in double-stranded DNA using NAD as a coenzyme and as the energy source for the reaction. It is essential for DNA replication and repair of damaged DNA. The chain is DNA ligase from Koribacter versatilis (strain Ellin345).